We begin with the raw amino-acid sequence, 1081 residues long: Mediator of RNA polymerase II transcription subunit 15 (1081 aa).

At serine 2 the chain carries N-acetylserine. Residues 25 to 49 (LQVLMDINTLNGGSSDTADKIRIHA) are interaction with GCN4. The interval 238–286 (QAQAQANNNNNGLPQNGNINNNINIPQQQQMQPPNSSANNNPLQQQSSQ) is disordered. Phosphoserine is present on serine 335. Repeat copies occupy residues 422–423 (QA), 424–425 (QA), 426–427 (QA), 428–429 (QA), 430–431 (QA), 432–433 (QA), 434–435 (QA), 436–437 (QA), 438–439 (QA), 440–441 (QA), and 442–443 (QA). Residues 422-481 (QAQAQAQAQAQAQAQAQAQAQAAQAAQAQAQAQAQAQAQAQAQAQAQAQAQAQAQAQAQA) are 30 X 2 AA approximate tandem repeats of Q-A. Residues 444 to 445 (AQ) form a 12; approximate repeat. Residues 446-447 (AA) form a 13; approximate repeat. 17 repeat units span residues 448-449 (QA), 450-451 (QA), 452-453 (QA), 454-455 (QA), 456-457 (QA), 458-459 (QA), 460-461 (QA), 462-463 (QA), 464-465 (QA), 466-467 (QA), 468-469 (QA), 470-471 (QA), 472-473 (QA), 474-475 (QA), 476-477 (QA), 478-479 (QA), and 480-481 (QA). Residues 476 to 497 (QAQAQAHAQHQPSQQPQQAQQQ) are compositionally biased toward low complexity. Disordered stretches follow at residues 476–505 (QAQAQAHAQHQPSQQPQQAQQQPNPLHGLT) and 692–712 (QQQQQHIYPSSTPGVANYSAM). Residues serine 736, serine 752, serine 783, serine 785, and serine 789 each carry the phosphoserine modification. The tract at residues 744–836 (PVSAAATPSL…KTVQSPMGAQ (93 aa)) is disordered. The segment covering 749–836 (ATPSLNKTIN…KTVQSPMGAQ (88 aa)) has biased composition (polar residues). Phosphothreonine is present on threonine 793. Phosphoserine is present on residues serine 831, serine 1003, serine 1008, serine 1018, and serine 1034. Positions 1026–1055 (DSKKIKVDSPDDPFMTKSGATTSEKQEVTN) are disordered.

It belongs to the Mediator complex subunit 15 family. As to quaternary structure, component of the Mediator complex, which is composed of at least 21 subunits that form three structurally distinct submodules. The Mediator head module contains MED6, MED8, MED11, SRB4/MED17, SRB5/MED18, ROX3/MED19, SRB2/MED20 and SRB6/MED22, the middle module contains MED1, MED4, NUT1/MED5, MED7, CSE2/MED9, NUT2/MED10, SRB7/MED21 and SOH1/MED31, and the tail module contains MED2, PGD1/MED3, RGR1/MED14, GAL11/MED15 and SIN4/MED16. The head and the middle modules interact directly with RNA polymerase II, whereas the elongated tail module interacts with gene-specific regulatory proteins. GAL11/MED15 interacts with the activator GAL4; the interaction is direct. GAL11/MED15 interacts (via multiple regions) with the activator GCN4; the interaction is direct.

It is found in the nucleus. Functionally, component of the Mediator complex, a coactivator involved in the regulated transcription of nearly all RNA polymerase II-dependent genes. Mediator functions as a bridge to convey information from gene-specific regulatory proteins to the basal RNA polymerase II transcription machinery. The Mediator complex, having a compact conformation in its free form, is recruited to promoters by direct interactions with regulatory proteins and serves for the assembly of a functional pre-initiation complex with RNA polymerase II and the general transcription factors. The Mediator complex unfolds to an extended conformation and partially surrounds RNA polymerase II, specifically interacting with the unphosphorylated form of the C-terminal domain (CTD) of RNA polymerase II. The Mediator complex dissociates from the RNA polymerase II holoenzyme and stays at the promoter when transcriptional elongation begins. It has an important role in the negative regulation of Ty transcription. The polypeptide is Mediator of RNA polymerase II transcription subunit 15 (Saccharomyces cerevisiae (strain ATCC 204508 / S288c) (Baker's yeast)).